The sequence spans 228 residues: Probable septum site-determining protein MinC (228 aa).

It belongs to the MinC family. Interacts with MinD and FtsZ.

Its function is as follows. Cell division inhibitor that blocks the formation of polar Z ring septums. Rapidly oscillates between the poles of the cell to destabilize FtsZ filaments that have formed before they mature into polar Z rings. Prevents FtsZ polymerization. This is Probable septum site-determining protein MinC from Pectobacterium carotovorum subsp. carotovorum (strain PC1).